The primary structure comprises 43 residues: Protein PsbN (43 aa).

The chain crosses the membrane as a helical span at residues 5–27 (TLVXISISGSLVSFTGYALYTAF).

Belongs to the PsbN family.

Its subcellular location is the plastid. The protein resides in the chloroplast thylakoid membrane. Functionally, may play a role in photosystem I and II biogenesis. The sequence is that of Protein PsbN from Calycanthus floridus (Eastern sweetshrub).